We begin with the raw amino-acid sequence, 342 residues long: Flagellar P-ring protein (342 aa).

The N-terminal stretch at 1-19 is a signal peptide; sequence MKRVFLWLIFVLAFHKLLA.

The protein belongs to the FlgI family. The basal body constitutes a major portion of the flagellar organelle and consists of four rings (L,P,S, and M) mounted on a central rod.

Its subcellular location is the periplasm. It localises to the bacterial flagellum basal body. Its function is as follows. Assembles around the rod to form the L-ring and probably protects the motor/basal body from shearing forces during rotation. The chain is Flagellar P-ring protein from Helicobacter pylori (strain G27).